Reading from the N-terminus, the 501-residue chain is Lysine--tRNA ligase (501 aa).

Glutamate 410 and glutamate 417 together coordinate Mg(2+).

The protein belongs to the class-II aminoacyl-tRNA synthetase family. In terms of assembly, homodimer. Mg(2+) is required as a cofactor.

It is found in the cytoplasm. It carries out the reaction tRNA(Lys) + L-lysine + ATP = L-lysyl-tRNA(Lys) + AMP + diphosphate. In Shewanella pealeana (strain ATCC 700345 / ANG-SQ1), this protein is Lysine--tRNA ligase.